Consider the following 116-residue polypeptide: Large ribosomal subunit protein bL19 (116 aa).

Belongs to the bacterial ribosomal protein bL19 family.

In terms of biological role, this protein is located at the 30S-50S ribosomal subunit interface and may play a role in the structure and function of the aminoacyl-tRNA binding site. In Geobacillus sp. (strain WCH70), this protein is Large ribosomal subunit protein bL19.